We begin with the raw amino-acid sequence, 70 residues long: Sec-independent protein translocase protein TatA (70 aa).

Residues 1–21 (MGIGVWELLLLFLIVLVVFGT) traverse the membrane as a helical segment. The tract at residues 42 to 70 (MSENEDKPSEGGARTLEGEVVDKKEKDKV) is disordered. A compositionally biased stretch (basic and acidic residues) spans 57–70 (LEGEVVDKKEKDKV).

Belongs to the TatA/E family. As to quaternary structure, the Tat system comprises two distinct complexes: a TatABC complex, containing multiple copies of TatA, TatB and TatC subunits, and a separate TatA complex, containing only TatA subunits. Substrates initially bind to the TatABC complex, which probably triggers association of the separate TatA complex to form the active translocon.

The protein localises to the cell inner membrane. Its function is as follows. Part of the twin-arginine translocation (Tat) system that transports large folded proteins containing a characteristic twin-arginine motif in their signal peptide across membranes. TatA could form the protein-conducting channel of the Tat system. The chain is Sec-independent protein translocase protein TatA from Methylococcus capsulatus (strain ATCC 33009 / NCIMB 11132 / Bath).